Reading from the N-terminus, the 724-residue chain is uncharacterized protein (724 aa).

Disordered stretches follow at residues 97-131 (RKSFTTPKGVSSEARRSFTRSASYSESNNSFYPSP), 187-252 (ETKI…FETE), 309-434 (FETE…TSKL), and 454-473 (RGVEGKTKKASKGQNSVAEK). The segment covering 115–128 (TRSASYSESNNSFY) has biased composition (polar residues). Residues 187 to 217 (ETKIGIEEENEESEILAEEKEEEDNDFSVLE) are a coiled coil. Residues 193–212 (EEENEESEILAEEKEEEDND) are compositionally biased toward acidic residues. 2 stretches are compositionally biased toward basic and acidic residues: residues 223–252 (QEIKTEHHRESSGTEHETEAKDHSEGFETE) and 309–322 (FETEHENETEDHSE). Composition is skewed to low complexity over residues 323–333 (TTTSETDSTES) and 347–366 (SPQTPSPTVSTFNTKSSLRS). The segment covering 367 to 388 (QPPPPPPSPEHKAPAPPPPPPM) has biased composition (pro residues). Polar residues predominate over residues 400-410 (FSKTHSTNGDN). 2 coiled-coil regions span residues 495 to 522 (SYFQQIEEDVQKYAKSIEELKSSIHSFQ) and 649 to 678 (MELALKERREANEEAKNGEESKMKEERAKR).

This is an uncharacterized protein from Arabidopsis thaliana (Mouse-ear cress).